The following is a 70-amino-acid chain: MMSKLGVLLIICLLLCPLTAVPQDGDQPADQPAERMQDDISSEHHPFFDPVKRCCKYGWTCWLGCSPCGC.

An N-terminal signal peptide occupies residues 1 to 20 (MMSKLGVLLIICLLLCPLTA). Positions 21–51 (VPQDGDQPADQPAERMQDDISSEHHPFFDPV) are excised as a propeptide.

Post-translationally, contains 3 disulfide bonds. They are not added, since framework IV presents two different connectivities (I-V, II-III, IV-VI and I-III, II-V, IV-VI). As to expression, expressed by the venom duct.

The protein localises to the secreted. Functionally, mu-conotoxins block voltage-gated sodium channels (Nav). Blocks reversibly sodium channels in molluskan neurons, but has no effect on sodium currents in bovine chromaffin cells or in rat brain synaptosomes. Induces paralysis in bivalve mollusks (Mytilus). No effect are observed on fish (Gambusia) and fly larvae (Sarcophaga). Is approximately 6 times more potent than PnIVA in blockade of the sodium current in Lymnaea neurons. The polypeptide is Mu-conotoxin PnIVB (Conus pennaceus (Feathered cone)).